We begin with the raw amino-acid sequence, 362 residues long: UDP-N-acetylglucosamine--N-acetylmuramyl-(pentapeptide) pyrophosphoryl-undecaprenol N-acetylglucosamine transferase (362 aa).

Residues 15 to 17, asparagine 127, arginine 165, serine 191, isoleucine 247, 266 to 271, and glutamine 292 contribute to the UDP-N-acetyl-alpha-D-glucosamine site; these read TGG and ALTVSE.

It belongs to the glycosyltransferase 28 family. MurG subfamily.

Its subcellular location is the cell inner membrane. The catalysed reaction is di-trans,octa-cis-undecaprenyl diphospho-N-acetyl-alpha-D-muramoyl-L-alanyl-D-glutamyl-meso-2,6-diaminopimeloyl-D-alanyl-D-alanine + UDP-N-acetyl-alpha-D-glucosamine = di-trans,octa-cis-undecaprenyl diphospho-[N-acetyl-alpha-D-glucosaminyl-(1-&gt;4)]-N-acetyl-alpha-D-muramoyl-L-alanyl-D-glutamyl-meso-2,6-diaminopimeloyl-D-alanyl-D-alanine + UDP + H(+). Its pathway is cell wall biogenesis; peptidoglycan biosynthesis. Cell wall formation. Catalyzes the transfer of a GlcNAc subunit on undecaprenyl-pyrophosphoryl-MurNAc-pentapeptide (lipid intermediate I) to form undecaprenyl-pyrophosphoryl-MurNAc-(pentapeptide)GlcNAc (lipid intermediate II). The sequence is that of UDP-N-acetylglucosamine--N-acetylmuramyl-(pentapeptide) pyrophosphoryl-undecaprenol N-acetylglucosamine transferase from Shewanella sp. (strain ANA-3).